A 250-amino-acid polypeptide reads, in one-letter code: Flavin-dependent thymidylate synthase (250 aa).

One can recognise a ThyX domain in the interval 7–233 (LRVQLIAKTE…PQVFSDFEIV (227 aa)). Residues Ser71, 95–97 (RHR), and Gln103 contribute to the FAD site. DUMP is bound by residues 92-95 (ELIR), 103-107 (QLSQR), and Arg172. Positions 95–105 (RHRHFSYSQLS) match the ThyX motif motif. Residues 188–190 (NYR) and His194 each bind FAD. Arg199 provides a ligand contact to dUMP. Arg199 (involved in ionization of N3 of dUMP, leading to its activation) is an active-site residue.

It belongs to the thymidylate synthase ThyX family. In terms of assembly, homotetramer. The cofactor is FAD.

The enzyme catalyses dUMP + (6R)-5,10-methylene-5,6,7,8-tetrahydrofolate + NADPH + H(+) = dTMP + (6S)-5,6,7,8-tetrahydrofolate + NADP(+). Its pathway is pyrimidine metabolism; dTTP biosynthesis. Its function is as follows. Catalyzes the reductive methylation of 2'-deoxyuridine-5'-monophosphate (dUMP) to 2'-deoxythymidine-5'-monophosphate (dTMP) while utilizing 5,10-methylenetetrahydrofolate (mTHF) as the methyl donor, and NADPH and FADH(2) as the reductant. The protein is Flavin-dependent thymidylate synthase of Mycolicibacterium vanbaalenii (strain DSM 7251 / JCM 13017 / BCRC 16820 / KCTC 9966 / NRRL B-24157 / PYR-1) (Mycobacterium vanbaalenii).